The following is an 88-amino-acid chain: Putative regulatory protein DvMF_1139 (88 aa).

This sequence belongs to the RemA family.

This is Putative regulatory protein DvMF_1139 from Nitratidesulfovibrio vulgaris (strain DSM 19637 / Miyazaki F) (Desulfovibrio vulgaris).